The sequence spans 149 residues: Nucleoside diphosphate kinase (149 aa).

Positions 9, 57, 85, 91, 102, and 112 each coordinate ATP. His-115 serves as the catalytic Pros-phosphohistidine intermediate.

It belongs to the NDK family. As to quaternary structure, homotetramer. Mg(2+) serves as cofactor.

It is found in the cytoplasm. It carries out the reaction a 2'-deoxyribonucleoside 5'-diphosphate + ATP = a 2'-deoxyribonucleoside 5'-triphosphate + ADP. The enzyme catalyses a ribonucleoside 5'-diphosphate + ATP = a ribonucleoside 5'-triphosphate + ADP. Functionally, major role in the synthesis of nucleoside triphosphates other than ATP. The ATP gamma phosphate is transferred to the NDP beta phosphate via a ping-pong mechanism, using a phosphorylated active-site intermediate. This chain is Nucleoside diphosphate kinase, found in Staphylococcus aureus (strain MSSA476).